The primary structure comprises 446 residues: Signal recognition particle protein (446 aa).

Residues 108-115 (GLQGAGKT), 191-195 (DTAGR), and 249-252 (TKLD) contribute to the GTP site.

The protein belongs to the GTP-binding SRP family. SRP54 subfamily. In terms of assembly, part of the signal recognition particle protein translocation system, which is composed of SRP and FtsY. Interacts with a small cytoplasmic RNA (sc-RNA).

It is found in the cytoplasm. It catalyses the reaction GTP + H2O = GDP + phosphate + H(+). In terms of biological role, involved in targeting and insertion of nascent membrane proteins into the cytoplasmic membrane. Binds to the hydrophobic signal sequence of the ribosome-nascent chain (RNC) as it emerges from the ribosomes. The SRP-RNC complex is then targeted to the cytoplasmic membrane where it interacts with the SRP receptor FtsY. Interaction with FtsY leads to the transfer of the RNC complex to the Sec translocase for insertion into the membrane, the hydrolysis of GTP by both Ffh and FtsY, and the dissociation of the SRP-FtsY complex into the individual components. This Bacillus subtilis (strain 168) protein is Signal recognition particle protein.